We begin with the raw amino-acid sequence, 630 residues long: tRNA uridine 5-carboxymethylaminomethyl modification enzyme MnmG (630 aa).

13 to 18 (GGGHAG) serves as a coordination point for FAD. 273–287 (GPRYCPSIEDKIHRF) serves as a coordination point for NAD(+).

It belongs to the MnmG family. In terms of assembly, homodimer. Heterotetramer of two MnmE and two MnmG subunits. It depends on FAD as a cofactor.

The protein localises to the cytoplasm. Its function is as follows. NAD-binding protein involved in the addition of a carboxymethylaminomethyl (cmnm) group at the wobble position (U34) of certain tRNAs, forming tRNA-cmnm(5)s(2)U34. This chain is tRNA uridine 5-carboxymethylaminomethyl modification enzyme MnmG, found in Pseudomonas aeruginosa (strain LESB58).